The following is a 147-amino-acid chain: ATP synthase epsilon chain (147 aa).

Belongs to the ATPase epsilon chain family. F-type ATPases have 2 components, CF(1) - the catalytic core - and CF(0) - the membrane proton channel. CF(1) has five subunits: alpha(3), beta(3), gamma(1), delta(1), epsilon(1). CF(0) has three main subunits: a, b and c.

Its subcellular location is the cell inner membrane. Functionally, produces ATP from ADP in the presence of a proton gradient across the membrane. The sequence is that of ATP synthase epsilon chain from Protochlamydia amoebophila (strain UWE25).